Reading from the N-terminus, the 649-residue chain is DNA ligase (649 aa).

NAD(+) is bound by residues 62–66 (DSTYD) and 104–105 (ST). Lys-142 serves as the catalytic N6-AMP-lysine intermediate. Positions 158, 189, and 301 each coordinate NAD(+). Residues Cys-389, Cys-392, Cys-405, and Cys-411 each coordinate Zn(2+). A BRCT domain is found at 569–649 (PGETPVFGKI…LDYLALISTY (81 aa)).

Belongs to the NAD-dependent DNA ligase family. LigA subfamily. Requires Mg(2+) as cofactor. The cofactor is Mn(2+).

The catalysed reaction is NAD(+) + (deoxyribonucleotide)n-3'-hydroxyl + 5'-phospho-(deoxyribonucleotide)m = (deoxyribonucleotide)n+m + AMP + beta-nicotinamide D-nucleotide.. In terms of biological role, DNA ligase that catalyzes the formation of phosphodiester linkages between 5'-phosphoryl and 3'-hydroxyl groups in double-stranded DNA using NAD as a coenzyme and as the energy source for the reaction. It is essential for DNA replication and repair of damaged DNA. The protein is DNA ligase of Psychromonas ingrahamii (strain DSM 17664 / CCUG 51855 / 37).